A 225-amino-acid polypeptide reads, in one-letter code: GTP cyclohydrolase 1 (225 aa).

Positions 1–12 (MERSKQSHDNQA) are enriched in basic and acidic residues. The tract at residues 1 to 59 (MERSKQSHDNQADSRPTTNESSLNGHFDGLVKKTPGMWDVKGRGTAGESSSHTGSSVVE) is disordered. Polar residues-rich tracts occupy residues 13 to 24 (DSRPTTNESSLN) and 47 to 58 (GESSSHTGSSVV). 3 residues coordinate Zn(2+): cysteine 149, histidine 152, and cysteine 220.

Belongs to the GTP cyclohydrolase I family. As to quaternary structure, toroid-shaped homodecamer, composed of two pentamers of five dimers.

It is found in the cytoplasm. The protein localises to the nucleus. It catalyses the reaction GTP + H2O = 7,8-dihydroneopterin 3'-triphosphate + formate + H(+). Its pathway is cofactor biosynthesis; 7,8-dihydroneopterin triphosphate biosynthesis; 7,8-dihydroneopterin triphosphate from GTP: step 1/1. GTP shows a positive allosteric effect, and tetrahydrobiopterin inhibits the enzyme activity. Zinc is required for catalytic activity. Inhibited by Mg(2+). Functionally, may positively regulate nitric oxide synthesis in endothelial cells. May be involved in dopamine synthesis. May modify pain sensitivity and persistence. The polypeptide is GTP cyclohydrolase 1 (gch1) (Oncorhynchus mykiss (Rainbow trout)).